The sequence spans 332 residues: MKIALDAMSGDFAPISTVKGAIEALEEIEGLQVILVGKEGIIKEELKKYKYDTNRIEIKNADEVIVMTDDPVKAVREKKDSSMNVCIDLVKEKLAQASVSCGNTGALLASSQLKLKRIKGVLRPAIAVLFPNKKDSGTLFLDLGANSDSKPEFLNQFATMGSKYMEIFSGKKNPKVALLNIGEEETKGNELTRETYALLKENKDIDFYGNIESTKIMEGDVDVVVTDGYTGNILLKTSEGIGKFIFHIVKESIMESWISKLGALLVKGAMKKVKKKTEASEYGGAIFLGLSELSLKAHGNSDSRAIKNALKVASKFIELNFIEELRKTMEVE.

The protein belongs to the PlsX family. In terms of assembly, homodimer. Probably interacts with PlsY.

The protein resides in the cytoplasm. It carries out the reaction a fatty acyl-[ACP] + phosphate = an acyl phosphate + holo-[ACP]. The protein operates within lipid metabolism; phospholipid metabolism. In terms of biological role, catalyzes the reversible formation of acyl-phosphate (acyl-PO(4)) from acyl-[acyl-carrier-protein] (acyl-ACP). This enzyme utilizes acyl-ACP as fatty acyl donor, but not acyl-CoA. This is Phosphate acyltransferase from Fusobacterium nucleatum subsp. nucleatum (strain ATCC 25586 / DSM 15643 / BCRC 10681 / CIP 101130 / JCM 8532 / KCTC 2640 / LMG 13131 / VPI 4355).